Here is a 445-residue protein sequence, read N- to C-terminus: 3-phosphoshikimate 1-carboxyvinyltransferase (445 aa).

The 3-phosphoshikimate site is built by K21, S22, and R26. K21 contributes to the phosphoenolpyruvate binding site. 2 residues coordinate phosphoenolpyruvate: G92 and R120. 3-phosphoshikimate-binding residues include S165, Q166, D307, and K334. A phosphoenolpyruvate-binding site is contributed by Q166. The active-site Proton acceptor is the D307. Phosphoenolpyruvate is bound by residues R338, R379, and K405.

The protein belongs to the EPSP synthase family. Monomer.

The protein resides in the cytoplasm. The enzyme catalyses 3-phosphoshikimate + phosphoenolpyruvate = 5-O-(1-carboxyvinyl)-3-phosphoshikimate + phosphate. Its pathway is metabolic intermediate biosynthesis; chorismate biosynthesis; chorismate from D-erythrose 4-phosphate and phosphoenolpyruvate: step 6/7. Catalyzes the transfer of the enolpyruvyl moiety of phosphoenolpyruvate (PEP) to the 5-hydroxyl of shikimate-3-phosphate (S3P) to produce enolpyruvyl shikimate-3-phosphate and inorganic phosphate. This is 3-phosphoshikimate 1-carboxyvinyltransferase from Chlamydia pneumoniae (Chlamydophila pneumoniae).